The following is a 329-amino-acid chain: Phenylalanine--tRNA ligase alpha subunit (329 aa).

Glu254 provides a ligand contact to Mg(2+).

Belongs to the class-II aminoacyl-tRNA synthetase family. Phe-tRNA synthetase alpha subunit type 1 subfamily. As to quaternary structure, tetramer of two alpha and two beta subunits. Requires Mg(2+) as cofactor.

Its subcellular location is the cytoplasm. The enzyme catalyses tRNA(Phe) + L-phenylalanine + ATP = L-phenylalanyl-tRNA(Phe) + AMP + diphosphate + H(+). The polypeptide is Phenylalanine--tRNA ligase alpha subunit (Histophilus somni (strain 2336) (Haemophilus somnus)).